A 97-amino-acid chain; its full sequence is Small ribosomal subunit protein bS20 (97 aa).

The protein belongs to the bacterial ribosomal protein bS20 family.

Its function is as follows. Binds directly to 16S ribosomal RNA. This is Small ribosomal subunit protein bS20 from Synechocystis sp. (strain ATCC 27184 / PCC 6803 / Kazusa).